The following is a 48-amino-acid chain: Sperm protamine P1 (48 aa).

Belongs to the protamine P1 family. In terms of tissue distribution, testis.

Its subcellular location is the nucleus. The protein localises to the chromosome. In terms of biological role, protamines substitute for histones in the chromatin of sperm during the haploid phase of spermatogenesis. They compact sperm DNA into a highly condensed, stable and inactive complex. This chain is Sperm protamine P1 (PRM1), found in Corynorhinus townsendii (Townsend's big-eared bat).